The following is a 196-amino-acid chain: Molybdenum cofactor guanylyltransferase (196 aa).

GTP contacts are provided by residues 10–12 (LAG), K23, N51, D69, and D99. Residue D99 participates in Mg(2+) binding.

Belongs to the MobA family. Monomer. It depends on Mg(2+) as a cofactor.

The protein localises to the cytoplasm. The catalysed reaction is Mo-molybdopterin + GTP + H(+) = Mo-molybdopterin guanine dinucleotide + diphosphate. Its function is as follows. Transfers a GMP moiety from GTP to Mo-molybdopterin (Mo-MPT) cofactor (Moco or molybdenum cofactor) to form Mo-molybdopterin guanine dinucleotide (Mo-MGD) cofactor. The chain is Molybdenum cofactor guanylyltransferase from Shewanella sp. (strain W3-18-1).